A 484-amino-acid chain; its full sequence is Ribonuclease Y (484 aa).

A helical transmembrane segment spans residues 18–38 (FFAFLFLIIIAFNLCLFAYLY). A KH domain is found at 166–234 (SPSFLISESD…LTVRNILMND (69 aa)). The HD domain occupies 293 to 385 (VLSHSLETAF…TQIADKLSAA (93 aa)).

It belongs to the RNase Y family.

Its subcellular location is the cell membrane. Functionally, endoribonuclease that initiates mRNA decay. In Mycoplasma genitalium (strain ATCC 33530 / DSM 19775 / NCTC 10195 / G37) (Mycoplasmoides genitalium), this protein is Ribonuclease Y.